The primary structure comprises 337 residues: Pentalenene synthase (337 aa).

Residues Asp80, Asp84, Asn219, Ser223, and Glu227 each coordinate Mg(2+). The DDXXD motif motif lies at 80–84 (DDLFD).

This sequence belongs to the terpene synthase family. As to quaternary structure, monomer. Mg(2+) is required as a cofactor.

It carries out the reaction (2E,6E)-farnesyl diphosphate = pentalenene + diphosphate. It functions in the pathway sesquiterpene biosynthesis; pentalenene biosynthesis; pentalenene from farnesyl diphosphate: step 1/1. It participates in antibiotic biosynthesis; pentalenolactone biosynthesis. In terms of biological role, catalyzes the cyclization of farnesyl diphosphate (FPP) to the tricyclic sesquiterpene pentalenene, which is the hydrocarbon precursor of the pentalenolactone family of antibiotics produced by a variety of Streptomyces species. In Streptomyces arenae, this protein is Pentalenene synthase (pntA).